The following is a 480-amino-acid chain: MINAKKEFQQRVRNMIPGMRRVHQIHFVGIGGAGMGGIAEVLLNEGYAVTGSDIAESAVTNRLISLGAKIHFSHAASNVDNASVVVVSSAIKADNVEVVAAHEKRIPVIQRAQMLAEIMRFRHGIAVAGTHGKTTTTAMISMIYAQAGLDPTFVNGGLVKSAGTNAHLGCSRYLIAEADESDASFLHLQPMVSVVTNIEPDHMDTYHGDFDEMKRTYVNFLHNLPFYGLSVMCADDPVLLELIPQVGRPVITYGFSEEADYRIENYEQTGFQGHYSVITPAGERIDVLLNVPGKHNALNATAALAVAKEEGIENEAILAALADFQGAGRRFDQLGSFIRPNGKVMLVDDYGHHPTEVNVTIQAARKGWENKRIVMIFQPHRYSRTRDLFDDFVRVLSQVDLLIMLDVYPAGESPIAGADSRSLCRSIRNLGQVDPILVTDTAELPEIMDRVLQDGDLVLAQGAGNVSKLSRQLVELWTKA.

Residue 129–135 coordinates ATP; that stretch reads GTHGKTT.

The protein belongs to the MurCDEF family.

It localises to the cytoplasm. The enzyme catalyses UDP-N-acetyl-alpha-D-muramate + L-alanine + ATP = UDP-N-acetyl-alpha-D-muramoyl-L-alanine + ADP + phosphate + H(+). Its pathway is cell wall biogenesis; peptidoglycan biosynthesis. In terms of biological role, cell wall formation. The protein is UDP-N-acetylmuramate--L-alanine ligase of Mannheimia succiniciproducens (strain KCTC 0769BP / MBEL55E).